A 163-amino-acid chain; its full sequence is Transcriptional repressor NrdR (163 aa).

A zinc finger lies at 3 to 34 (CPKCNYLKSSVVDSRQAEEGNTIRRRRECENC). The region spanning 49 to 139 (LLVVKKDGTR…VYRSFKDVDE (91 aa)) is the ATP-cone domain.

This sequence belongs to the NrdR family. The cofactor is Zn(2+).

Its function is as follows. Negatively regulates transcription of bacterial ribonucleotide reductase nrd genes and operons by binding to NrdR-boxes. This is Transcriptional repressor NrdR from Streptococcus mutans serotype c (strain ATCC 700610 / UA159).